We begin with the raw amino-acid sequence, 451 residues long: D-ribitol-5-phosphate cytidylyltransferase (451 aa).

The interval 1-29 is disordered; sequence MEAGPPGSARPAEPGPCLSGQRGADHTAS.

It belongs to the IspD/TarI cytidylyltransferase family. IspD subfamily. Homodimer. In terms of tissue distribution, ubiquitously expressed, with high expression in brain.

Its subcellular location is the cytoplasm. The protein localises to the cytosol. It catalyses the reaction D-ribitol 5-phosphate + CTP + H(+) = CDP-L-ribitol + diphosphate. It carries out the reaction D-ribose 5-phosphate + CTP + H(+) = CDP-D-ribose + diphosphate. The catalysed reaction is D-ribulose 5-phosphate + CTP + H(+) = CDP-D-ribulose + diphosphate. It participates in protein modification; protein glycosylation. Functionally, cytidylyltransferase required for protein O-linked mannosylation. Catalyzes the formation of CDP-ribitol nucleotide sugar from D-ribitol 5-phosphate. CDP-ribitol is a substrate of FKTN during the biosynthesis of the phosphorylated O-mannosyl trisaccharide (N-acetylgalactosamine-beta-3-N-acetylglucosamine-beta-4-(phosphate-6-)mannose), a carbohydrate structure present in alpha-dystroglycan (DAG1), which is required for binding laminin G-like domain-containing extracellular proteins with high affinity. Shows activity toward other pentose phosphate sugars and mediates formation of CDP-ribulose or CDP-ribose using CTP and ribulose-5-phosphate or ribose-5-phosphate, respectively. Not Involved in dolichol production. In Homo sapiens (Human), this protein is D-ribitol-5-phosphate cytidylyltransferase.